The primary structure comprises 429 residues: L-threonine dehydratase biosynthetic IlvA (429 aa).

Position 66 is an N6-(pyridoxal phosphate)lysine (Lys-66). Pyridoxal 5'-phosphate-binding positions include Asn-93, 196–200 (GGGGC), and Ser-322. Positions 346–420 (HYFLVDFPQE…TDIHVEALEP (75 aa)) constitute an ACT-like domain.

The protein belongs to the serine/threonine dehydratase family. As to quaternary structure, homotetramer. Pyridoxal 5'-phosphate serves as cofactor.

The catalysed reaction is L-threonine = 2-oxobutanoate + NH4(+). The protein operates within amino-acid biosynthesis; L-isoleucine biosynthesis; 2-oxobutanoate from L-threonine: step 1/1. Its function is as follows. Catalyzes the anaerobic formation of alpha-ketobutyrate and ammonia from threonine in a two-step reaction. The first step involved a dehydration of threonine and a production of enamine intermediates (aminocrotonate), which tautomerizes to its imine form (iminobutyrate). Both intermediates are unstable and short-lived. The second step is the nonenzymatic hydrolysis of the enamine/imine intermediates to form 2-ketobutyrate and free ammonia. In the low water environment of the cell, the second step is accelerated by RidA. This Mycobacterium bovis (strain ATCC BAA-935 / AF2122/97) protein is L-threonine dehydratase biosynthetic IlvA (ilvA).